Here is a 261-residue protein sequence, read N- to C-terminus: Synaptophysin-like protein 1 (261 aa).

The Cytoplasmic portion of the chain corresponds to 1-33 (MASKANMVRQRFSRLSQRMSAFQINLNPLKEPL). The 212-residue stretch at 28-239 (PLKEPLGFIK…NAWFVYKETS (212 aa)) folds into the MARVEL domain. The helical transmembrane segment at 34 to 54 (GFIKILEWFASIFAFATCGGF) threads the bilayer. Residues 55–117 (KGKTEIQVNC…LIGDYSSSAQ (63 aa)) lie on the Vesicular side of the membrane. N-linked (GlcNAc...) asparagine glycans are attached at residues asparagine 72 and asparagine 95. Residues 118-138 (FYVTFAVFVFLYCIAALLLYV) form a helical membrane-spanning segment. The Cytoplasmic segment spans residues 139–151 (GYTNLYRDSRKLP). A helical transmembrane segment spans residues 152 to 172 (MIDFIVTLVATFLWLVSSSAW). The Vesicular portion of the chain corresponds to 173 to 214 (AKALTDIKVATGHRIVEELEICNPESGVSCYFVSVTSMGSLN). N-linked (GlcNAc...) asparagine glycosylation occurs at asparagine 214. A helical transmembrane segment spans residues 215–235 (VSVIFGFLNMILWGGNAWFVY). The Cytoplasmic portion of the chain corresponds to 236–261 (KETSLHSPSNTSASHSQGGGPPTSGM). The segment covering 241–251 (HSPSNTSASHS) has biased composition (polar residues). Positions 241 to 261 (HSPSNTSASHSQGGGPPTSGM) are disordered. Gly residues predominate over residues 252-261 (QGGGPPTSGM).

The protein belongs to the synaptophysin/synaptobrevin family. In terms of tissue distribution, ubiquitously expressed.

It localises to the cytoplasmic vesicle membrane. The protein resides in the melanosome. This Mus musculus (Mouse) protein is Synaptophysin-like protein 1 (Sypl1).